The chain runs to 83 residues: Delta-conotoxin-like Ac6.1 (83 aa).

A signal peptide spans 1-22 (MKLTCVVIVAVLFLTAWTFVMA). The propeptide occupies 23–51 (DDSRYGLKDLFPKARHEMKNPEASKLNKR). Cystine bridges form between Cys-54–Cys-69, Cys-61–Cys-73, and Cys-68–Cys-78. 4-hydroxyproline occurs at positions 57 and 65.

The protein belongs to the conotoxin O1 superfamily. In terms of tissue distribution, expressed by the venom duct.

It localises to the secreted. Its function is as follows. Delta-conotoxins bind to site 6 of voltage-gated sodium channels (Nav) and inhibit the inactivation process. This chain is Delta-conotoxin-like Ac6.1, found in Conus achatinus (Little frog cone).